Reading from the N-terminus, the 446-residue chain is uncharacterized protein (446 aa).

2 positions are modified to phosphoserine: S393 and S397. Residues 411 to 431 are disordered; it reads LSSTERRDLDRVRDKQKKQDQ.

This sequence belongs to the IFRD family.

The protein resides in the cytoplasm. This is an uncharacterized protein from Schizosaccharomyces pombe (strain 972 / ATCC 24843) (Fission yeast).